The primary structure comprises 661 residues: UvrABC system protein B (661 aa).

In terms of domain architecture, Helicase ATP-binding spans 25 to 178 (EGILKGEKFQ…DEVIRDLIRM (154 aa)). 38-45 (GVTGSGKT) serves as a coordination point for ATP. The Beta-hairpin motif lies at 91 to 114 (YYDYYQPEAYIPETDTYIEKDSSI). The Helicase C-terminal domain maps to 429–591 (QIDHLIGEIR…IVPQTVRKGI (163 aa)). The UVR domain maps to 625 to 660 (EEYIKELEQEMKKLAIELEFEKAAKVRDKIFELKKL).

Belongs to the UvrB family. Forms a heterotetramer with UvrA during the search for lesions. Interacts with UvrC in an incision complex.

It is found in the cytoplasm. Its function is as follows. The UvrABC repair system catalyzes the recognition and processing of DNA lesions. A damage recognition complex composed of 2 UvrA and 2 UvrB subunits scans DNA for abnormalities. Upon binding of the UvrA(2)B(2) complex to a putative damaged site, the DNA wraps around one UvrB monomer. DNA wrap is dependent on ATP binding by UvrB and probably causes local melting of the DNA helix, facilitating insertion of UvrB beta-hairpin between the DNA strands. Then UvrB probes one DNA strand for the presence of a lesion. If a lesion is found the UvrA subunits dissociate and the UvrB-DNA preincision complex is formed. This complex is subsequently bound by UvrC and the second UvrB is released. If no lesion is found, the DNA wraps around the other UvrB subunit that will check the other stand for damage. In Caldicellulosiruptor bescii (strain ATCC BAA-1888 / DSM 6725 / KCTC 15123 / Z-1320) (Anaerocellum thermophilum), this protein is UvrABC system protein B.